A 74-amino-acid chain; its full sequence is UPF0346 protein SE_1114 (74 aa).

It belongs to the UPF0346 family.

The protein is UPF0346 protein SE_1114 of Staphylococcus epidermidis (strain ATCC 12228 / FDA PCI 1200).